Consider the following 205-residue polypeptide: Small ribosomal subunit protein uS4 (205 aa).

Positions 95 to 163 constitute an S4 RNA-binding domain; that stretch reads RRLDNVVYRL…FKENLESRDP (69 aa).

Belongs to the universal ribosomal protein uS4 family. Part of the 30S ribosomal subunit. Contacts protein S5. The interaction surface between S4 and S5 is involved in control of translational fidelity.

In terms of biological role, one of the primary rRNA binding proteins, it binds directly to 16S rRNA where it nucleates assembly of the body of the 30S subunit. Functionally, with S5 and S12 plays an important role in translational accuracy. This chain is Small ribosomal subunit protein uS4, found in Persephonella marina (strain DSM 14350 / EX-H1).